Reading from the N-terminus, the 513-residue chain is Quiannulatic acid synthase (513 aa).

A helical transmembrane segment spans residues 14-34 (VFTFCNIILALASLVVAQCVY). Asn-308 carries N-linked (GlcNAc...) asparagine glycosylation. Cys-477 provides a ligand contact to heme.

The protein belongs to the cytochrome P450 family. The cofactor is heme.

Its subcellular location is the membrane. The catalysed reaction is quiannulatene + 3 reduced [NADPH--hemoprotein reductase] + 3 O2 = quiannulatate + 3 oxidized [NADPH--hemoprotein reductase] + 4 H2O + 4 H(+). Its pathway is secondary metabolite biosynthesis; terpenoid biosynthesis. Functionally, cytochrome P450 monooxygenase; part of the gene cluster that mediates the biosynthesis of the pentacyclic sesterterpene quiannulatic acid. The first step of the pathway is performed by the sesterterpene synthase (QS) that possesses both prenyl transferase and terpene cyclase activity, converting isopentenyl diphosphate and dimethylallyl diphosphate into geranylfarnesyl diphosphate (GFPP) and further converting GFPP into quiannulatene via an unprecedented cyclization mode which involves three rounds of hydride shifts and two successive C-C bond migrations to construct the 5-6-5-5-5 fused ring. The cytochrome P450 monooxygenase Qnn-P450 then oxidizes quiannulatene at C-19 in 3 successive reactions to afford quiannulatic acid. The sequence is that of Quiannulatic acid synthase from Emericella variicolor (Aspergillus stellatus).